The following is a 642-amino-acid chain: Threonine--tRNA ligase (642 aa).

Residues 1–61 form the TGS domain; that stretch reads MPVITLPDGS…DTDSELSIIT (61 aa). The segment at 243-534 is catalytic; the sequence is DHRKIGKQLD…LIEEYAGKFP (292 aa). Residues Cys-334, His-385, and His-511 each coordinate Zn(2+).

The protein belongs to the class-II aminoacyl-tRNA synthetase family. In terms of assembly, homodimer. Zn(2+) is required as a cofactor.

The protein localises to the cytoplasm. It carries out the reaction tRNA(Thr) + L-threonine + ATP = L-threonyl-tRNA(Thr) + AMP + diphosphate + H(+). Its function is as follows. Catalyzes the attachment of threonine to tRNA(Thr) in a two-step reaction: L-threonine is first activated by ATP to form Thr-AMP and then transferred to the acceptor end of tRNA(Thr). Also edits incorrectly charged L-seryl-tRNA(Thr). This Shewanella woodyi (strain ATCC 51908 / MS32) protein is Threonine--tRNA ligase.